The sequence spans 1139 residues: Ras GTPase-activating protein nGAP (1139 aa).

The tract at residues 1–87 is disordered; it reads MQTPEVPAER…SRGLPKLKES (87 aa). Ser16 is modified (phosphoserine). Over residues 17 to 36 the composition is skewed to polar residues; sequence ISGTSTSEKPNSMDTANTSP. The PH domain occupies 41–158; that stretch reads GFFSKRLKGS…WMENLRRTVQ (118 aa). Over residues 45–56 the composition is skewed to basic residues; it reads KRLKGSIKRTKS. The segment covering 73 to 87 has biased composition (basic and acidic residues); it reads STDDRSRGLPKLKES. Position 89 is a phosphoserine (Ser89). In terms of domain architecture, C2 spans 149–267; sequence WMENLRRTVQ…TGRQFVEKWY (119 aa). A Ras-GAP domain is found at 343–551; sequence GRAKDFLTDL…GGMKRFLLEI (209 aa). A Phosphothreonine modification is found at Thr620. Ser663 is subject to Phosphoserine. Disordered stretches follow at residues 684-704, 751-782, 803-869, 910-953, and 1116-1139; these read ASSQ…LPNG, ETQS…LSFQ, SLEN…GQAQ, EPVQ…SATM, and NGIS…NSSC. 2 stretches are compositionally biased toward polar residues: residues 751–760 and 803–818; these read ETQSTPQSAP and SLEN…QSNS. Residues 833-855 are compositionally biased toward basic and acidic residues; it reads DFTKRSTQSEDFSRRHTVPDRHI. At Ser864 the chain carries Phosphoserine. Over residues 916–928 the composition is skewed to low complexity; it reads SRSRQQSSSSRES.

In terms of assembly, interacts with PEAK1.

Inhibitory regulator of the Ras-cyclic AMP pathway. This is Ras GTPase-activating protein nGAP (RASAL2) from Homo sapiens (Human).